A 60-amino-acid chain; its full sequence is MSFFGLKRYSTPILKPMLPFFLGGAIVFYGTVKLRDAMMDSAEYRNDPRNPKAGKYGSDH.

Residues 13–32 form a helical membrane-spanning segment; it reads ILKPMLPFFLGGAIVFYGTV.

This sequence belongs to the ATPase j subunit family. F-type ATPases have 2 components, CF(1) - the catalytic core - and CF(0) - the membrane proton channel. In yeast, the dimeric form of ATP synthase consists of 17 polypeptides: alpha, beta, gamma, delta, epsilon, 4 (B), 5 (OSCP), 6 (A), 8, 9 (C), d, E (Tim11), f, g, h, i/j and k.

The protein localises to the mitochondrion membrane. In terms of biological role, mitochondrial membrane ATP synthase (F(1)F(0) ATP synthase or Complex V) produces ATP from ADP in the presence of a proton gradient across the membrane which is generated by electron transport complexes of the respiratory chain. F-type ATPases consist of two structural domains, F(1) - containing the extramembraneous catalytic core and F(0) - containing the membrane proton channel, linked together by a central stalk and a peripheral stalk. During catalysis, ATP synthesis in the catalytic domain of F(1) is coupled via a rotary mechanism of the central stalk subunits to proton translocation. Part of the complex F(0) domain. Minor subunit located with subunit a in the membrane. The protein is ATP synthase subunit J, mitochondrial (atp18) of Schizosaccharomyces pombe (strain 972 / ATCC 24843) (Fission yeast).